Here is a 126-residue protein sequence, read N- to C-terminus: Glycine cleavage system H protein (126 aa).

In terms of domain architecture, Lipoyl-binding spans 24–105; sequence TLTVGITDHA…AYGVWLFKIK (82 aa). K65 carries the post-translational modification N6-lipoyllysine.

It belongs to the GcvH family. In terms of assembly, the glycine cleavage system is composed of four proteins: P, T, L and H. Requires (R)-lipoate as cofactor.

Functionally, the glycine cleavage system catalyzes the degradation of glycine. The H protein shuttles the methylamine group of glycine from the P protein to the T protein. The chain is Glycine cleavage system H protein from Burkholderia cenocepacia (strain ATCC BAA-245 / DSM 16553 / LMG 16656 / NCTC 13227 / J2315 / CF5610) (Burkholderia cepacia (strain J2315)).